The sequence spans 366 residues: MWPPSHRQLCLAFLLVCVLSVISFFLHIHQDSFPHGLGLSILCPDRGLVTPPVAIFCLPGTAMGPNASSSCPQHPASLSGTWTVYPNGRFGNQMGQYATLLALAQLNGRRAFILPAMHAALAPVFRITLPVLAPEADSRTPWRELQLHDWMSEEYADLRDPFLKLSGFPCSWTFFHHLREQIRREFTLHDHLREEAQSVLGQLRLGRTGDRPRTFVGVHVRRGDYLQVMPQRWKGVVGDSAYLRQAMDWFRARHEAPVFVVTSNGMEWCKENIDTSQGDVTFAGDGQEATPWKDFALLTQCNHTIMTIGTFGFWAAYLAGGDTVYLANFTLPDSEFLKIFKPEAAFLPEWVGINADLSSLWTLAKP.

Over 1–8 (MWPPSHRQ) the chain is Cytoplasmic. Residues 9 to 25 (LCLAFLLVCVLSVISFF) traverse the membrane as a helical; Signal-anchor for type II membrane protein segment. Topologically, residues 26 to 366 (LHIHQDSFPH…LSSLWTLAKP (341 aa)) are lumenal. N66, N302, and N328 each carry an N-linked (GlcNAc...) asparagine glycan.

Belongs to the glycosyltransferase 11 family.

The protein localises to the golgi apparatus. The protein resides in the golgi stack membrane. It catalyses the reaction a beta-D-galactosyl-(1-&gt;4)-N-acetyl-beta-D-glucosaminyl derivative + GDP-beta-L-fucose = an alpha-L-Fuc-(1-&gt;2)-beta-D-Gal-(1-&gt;4)-beta-D-GlcNAc derivative + GDP + H(+). The catalysed reaction is a ganglioside GA1 + GDP-beta-L-fucose = a ganglioside Fuc-GA1 + GDP + H(+). It carries out the reaction a beta-D-Gal-(1-&gt;3)-beta-D-GlcNAc-(1-&gt;3)-beta-D-Gal-(1-&gt;4)-beta-D-Glc-(1&lt;-&gt;1')-Cer(d18:1(4E)) + GDP-beta-L-fucose = alpha-L-fucosyl-(1-&gt;2)- beta-D-galactosyl-(1-&gt;3)-N-acetyl-beta-D-glucosaminyl-(1-&gt;3)-beta-D-galactosyl-(1-&gt;4)-beta-D-glucosyl-(1&lt;-&gt;1')-N-acylsphing-4-enine + GDP + H(+). The enzyme catalyses a neolactoside nLc4Cer(d18:1(4E)) + GDP-beta-L-fucose = a neolactoside IV(2)-alpha-Fuc-nLc4Cer(d18:1(4E)) + GDP + H(+). It catalyses the reaction a ganglioside GM1 + GDP-beta-L-fucose = a ganglioside Fuc-GM1 + GDP + H(+). The catalysed reaction is beta-D-galactosyl-(1-&gt;3)-N-acetyl-D-galactosamine + GDP-beta-L-fucose = alpha-L-fucosyl-(1-&gt;2)-beta-D-galactosyl-(1-&gt;3)-N-acetyl-D-galactosamine + GDP + H(+). The protein operates within protein modification; protein glycosylation. Catalyzes the transfer of L-fucose, from a guanosine diphosphate-beta-L-fucose, to the terminal galactose residue of glycoconjugates through an alpha(1,2) linkage leading to H antigen synthesis that is an intermediate substrate in the synthesis of ABO blood group antigens. H antigen is essential for maturation of the glomerular layer of the main olfactory bulb, in cell migration and early cell-cell contacts during tumor associated angiogenesis. Preferentially fucosylates soluble lactose and to a lesser extent fucosylates glycolipids gangliosides GA1 and GM1a. The polypeptide is Galactoside alpha-(1,2)-fucosyltransferase 1 (Pan troglodytes (Chimpanzee)).